A 199-amino-acid chain; its full sequence is FMN-dependent NADH:quinone oxidoreductase (199 aa).

Serine 17 to serine 19 contacts FMN.

Belongs to the azoreductase type 1 family. In terms of assembly, homodimer. Requires FMN as cofactor.

It catalyses the reaction 2 a quinone + NADH + H(+) = 2 a 1,4-benzosemiquinone + NAD(+). The catalysed reaction is N,N-dimethyl-1,4-phenylenediamine + anthranilate + 2 NAD(+) = 2-(4-dimethylaminophenyl)diazenylbenzoate + 2 NADH + 2 H(+). Its function is as follows. Quinone reductase that provides resistance to thiol-specific stress caused by electrophilic quinones. In terms of biological role, also exhibits azoreductase activity. Catalyzes the reductive cleavage of the azo bond in aromatic azo compounds to the corresponding amines. The sequence is that of FMN-dependent NADH:quinone oxidoreductase from Mycoplasmopsis synoviae (strain 53) (Mycoplasma synoviae).